The primary structure comprises 92 residues: Large ribosomal subunit protein uL23c (92 aa).

The protein belongs to the universal ribosomal protein uL23 family. As to quaternary structure, part of the 50S ribosomal subunit.

Its subcellular location is the plastid. The protein resides in the chloroplast. Its function is as follows. Binds to 23S rRNA. The polypeptide is Large ribosomal subunit protein uL23c (rpl23) (Mesostigma viride (Green alga)).